The chain runs to 224 residues: UPF0758 protein AHA_0160 (224 aa).

The MPN domain occupies 102–224 (PLTSPQLTRD…TVSFAERGWL (123 aa)). Zn(2+) is bound by residues H173, H175, and D186. Positions 173–186 (HNHPSGVAEPSRAD) match the JAMM motif motif.

It belongs to the UPF0758 family.

This is UPF0758 protein AHA_0160 from Aeromonas hydrophila subsp. hydrophila (strain ATCC 7966 / DSM 30187 / BCRC 13018 / CCUG 14551 / JCM 1027 / KCTC 2358 / NCIMB 9240 / NCTC 8049).